A 78-amino-acid polypeptide reads, in one-letter code: Large ribosomal subunit protein bL28 (78 aa).

A disordered region spans residues 1 to 21 (MSRVCQVTGKRPMVGNNRSHA).

It belongs to the bacterial ribosomal protein bL28 family.

This is Large ribosomal subunit protein bL28 from Shewanella halifaxensis (strain HAW-EB4).